A 342-amino-acid polypeptide reads, in one-letter code: Holliday junction branch migration complex subunit RuvB (342 aa).

Residues 1–179 (MTNILSPEKS…FGIPMRLNFY (179 aa)) are large ATPase domain (RuvB-L). Residues Ile-18, Arg-19, Gly-60, Lys-63, Thr-64, Thr-65, 126–128 (EDF), Arg-169, Tyr-179, and Arg-216 each bind ATP. Thr-64 contacts Mg(2+). A small ATPAse domain (RuvB-S) region spans residues 180–250 (NTEELKKVLN…VSDFGLNRLE (71 aa)). The interval 253 to 342 (RIGLDSNDYR…HQFNIFNENE (90 aa)) is head domain (RuvB-H). DNA is bound by residues Arg-289, Arg-308, and Arg-313.

The protein belongs to the RuvB family. As to quaternary structure, homohexamer. Forms an RuvA(8)-RuvB(12)-Holliday junction (HJ) complex. HJ DNA is sandwiched between 2 RuvA tetramers; dsDNA enters through RuvA and exits via RuvB. An RuvB hexamer assembles on each DNA strand where it exits the tetramer. Each RuvB hexamer is contacted by two RuvA subunits (via domain III) on 2 adjacent RuvB subunits; this complex drives branch migration. In the full resolvosome a probable DNA-RuvA(4)-RuvB(12)-RuvC(2) complex forms which resolves the HJ.

The protein resides in the cytoplasm. It catalyses the reaction ATP + H2O = ADP + phosphate + H(+). Functionally, the RuvA-RuvB-RuvC complex processes Holliday junction (HJ) DNA during genetic recombination and DNA repair, while the RuvA-RuvB complex plays an important role in the rescue of blocked DNA replication forks via replication fork reversal (RFR). RuvA specifically binds to HJ cruciform DNA, conferring on it an open structure. The RuvB hexamer acts as an ATP-dependent pump, pulling dsDNA into and through the RuvAB complex. RuvB forms 2 homohexamers on either side of HJ DNA bound by 1 or 2 RuvA tetramers; 4 subunits per hexamer contact DNA at a time. Coordinated motions by a converter formed by DNA-disengaged RuvB subunits stimulates ATP hydrolysis and nucleotide exchange. Immobilization of the converter enables RuvB to convert the ATP-contained energy into a lever motion, pulling 2 nucleotides of DNA out of the RuvA tetramer per ATP hydrolyzed, thus driving DNA branch migration. The RuvB motors rotate together with the DNA substrate, which together with the progressing nucleotide cycle form the mechanistic basis for DNA recombination by continuous HJ branch migration. Branch migration allows RuvC to scan DNA until it finds its consensus sequence, where it cleaves and resolves cruciform DNA. This is Holliday junction branch migration complex subunit RuvB from Rickettsia rickettsii (strain Sheila Smith).